Reading from the N-terminus, the 303-residue chain is Peroxisomal trans-2-enoyl-CoA reductase (303 aa).

23–47 (VTGGATGIGKAIVKELLELGSNVVI) is an NADP(+) binding site. Lysine 32 bears the N6-succinyllysine mark. The residue at position 49 (serine 49) is a Phosphoserine. The active-site Proton acceptor is the tyrosine 179. Position 179 is a phosphotyrosine (tyrosine 179). Residues 301-303 (AKL) carry the Microbody targeting signal motif.

The protein belongs to the short-chain dehydrogenases/reductases (SDR) family. As to quaternary structure, interacts with PEX5, probably required to target it into peroxisomes.

It is found in the peroxisome. The enzyme catalyses a (2E)-enoyl-CoA + NADPH + H(+) = a 2,3-saturated acyl-CoA + NADP(+). It carries out the reaction (2E)-decenoyl-CoA + NADPH + H(+) = decanoyl-CoA + NADP(+). It catalyses the reaction (2E)-hexenoyl-CoA + NADPH + H(+) = hexanoyl-CoA + NADP(+). The catalysed reaction is (2E)-octenoyl-CoA + NADPH + H(+) = octanoyl-CoA + NADP(+). The enzyme catalyses (2E)-dodecenoyl-CoA + NADPH + H(+) = dodecanoyl-CoA + NADP(+). It carries out the reaction (2E)-tetradecenoyl-CoA + NADPH + H(+) = tetradecanoyl-CoA + NADP(+). Its pathway is lipid metabolism; fatty acid biosynthesis. In terms of biological role, participates in chain elongation of fatty acids. Catalyzes the reduction of trans-2-enoyl-CoAs of varying chain lengths from 6:1 to 16:1, having maximum activity with 10:1 CoA. Has no 2,4-dienoyl-CoA reductase activity. The polypeptide is Peroxisomal trans-2-enoyl-CoA reductase (Homo sapiens (Human)).